The sequence spans 363 residues: Fructose-bisphosphate aldolase (363 aa).

R56 and K147 together coordinate substrate. E188 (proton acceptor) is an active-site residue. K230 (schiff-base intermediate with dihydroxyacetone-P) is an active-site residue.

It belongs to the class I fructose-bisphosphate aldolase family.

The enzyme catalyses beta-D-fructose 1,6-bisphosphate = D-glyceraldehyde 3-phosphate + dihydroxyacetone phosphate. The protein operates within carbohydrate degradation; glycolysis; D-glyceraldehyde 3-phosphate and glycerone phosphate from D-glucose: step 4/4. The chain is Fructose-bisphosphate aldolase (FBPA) from Echinococcus multilocularis (Fox tapeworm).